The sequence spans 62 residues: UPF0434 protein Rleg2_3773 (62 aa).

The protein belongs to the UPF0434 family.

In Rhizobium leguminosarum bv. trifolii (strain WSM2304), this protein is UPF0434 protein Rleg2_3773.